The primary structure comprises 936 residues: Aftiphilin (936 aa).

Positions 1–36 (MEPDIIRMYSSSPPPLDNGAEDDDDDEFGEFGGFSE) are disordered. Residues 1 to 523 (MEPDIIRMYS…ARKSSGTGTE (523 aa)) are interaction with AP1G1, AP1G2, GGA1 and GGA3. Residues 19 to 29 (GAEDDDDDEFG) are compositionally biased toward acidic residues. Residues 28-31 (FGEF) carry the WXXF motif 1 motif. At Ser-151 the chain carries Phosphoserine. 2 disordered regions span residues 197–216 (TDDLDNVADSKGRKPLSTHS) and 374–409 (KTSDDEVGSPKEESRKFTNFQSPNIDPTEENDLDDS). Over residues 374–389 (KTSDDEVGSPKEESRK) the composition is skewed to basic and acidic residues. The segment at 386–610 (ESRKFTNFQS…EAWQSHRTDE (225 aa)) is interaction with AP1G1. Position 395 is a phosphoserine (Ser-395). The WXXF motif 2 signature appears at 432-435 (FGDF). Positions 436–438 (GDF) match the WXXF motif 3 (partial) motif. Residues 478–481 (FGEF) carry the WXXF motif 4 motif. Ser-518 is modified (phosphoserine). The segment at 589-637 (GDQQATESHHRKEAWQSHRTDENIDTPGTPKTHSVPSATSKGAVASGHL) is disordered. Residues 595–610 (ESHHRKEAWQSHRTDE) are compositionally biased toward basic and acidic residues. The residue at position 617 (Thr-617) is a Phosphothreonine. The segment covering 617–628 (TPKTHSVPSATS) has biased composition (polar residues). A CLTCL1/Clathrin-binding motif is present at residues 716–718 (YQW). The tract at residues 825 to 829 (LLNLD) is clathrin-binding.

Self-associates. Interacts with GGA1 (via GAE domain). Interacts with GGA3 (via GAE domain), AP1G1 (via GAE domain) and AP1G2 (via GAE domain). Component of the aftiphilin/p200/gamma-synergin complex, at least composed of AFTPH/aftiphilin, HEATR5B/p200a and SYNRG/gamma-synergin, which plays a role in the AP1G1/AP-1-mediated protein trafficking from early to recycling endosomes. Within the complex interacts with HEATR5B/p200a and SYNRG/gamma-synergin; the interactions are direct. Interacts with AP1G1/AP-1; the interaction is required to recruit AFTPH/aftiphilin to the perinuclear region of the cell. Interacts with CLTCL1/Clathrin.

It localises to the cytoplasm. The protein resides in the perinuclear region. Its subcellular location is the cytoplasmic vesicle. The protein localises to the clathrin-coated vesicle. Its function is as follows. Component of clathrin-coated vesicles. Component of the aftiphilin/p200/gamma-synergin complex, which plays roles in AP1G1/AP-1-mediated protein trafficking including the trafficking of transferrin from early to recycling endosomes, and the membrane trafficking of furin and the lysosomal enzyme cathepsin D between the trans-Golgi network (TGN) and endosomes. The sequence is that of Aftiphilin (AFTPH) from Homo sapiens (Human).